The chain runs to 312 residues: HPr kinase/phosphorylase (312 aa).

Catalysis depends on residues histidine 139 and lysine 160. ATP is bound at residue glycine 154–serine 161. A Mg(2+)-binding site is contributed by serine 161. Residue aspartate 178 is the Proton acceptor; for phosphorylation activity. Proton donor; for dephosphorylation activity of the active site. Residues leucine 202–asparagine 211 are important for the catalytic mechanism of both phosphorylation and dephosphorylation. Glutamate 203 provides a ligand contact to Mg(2+). The active site involves arginine 244. Residues proline 265 to arginine 270 are important for the catalytic mechanism of dephosphorylation.

It belongs to the HPrK/P family. In terms of assembly, homohexamer. Mg(2+) is required as a cofactor.

It catalyses the reaction [HPr protein]-L-serine + ATP = [HPr protein]-O-phospho-L-serine + ADP + H(+). It carries out the reaction [HPr protein]-O-phospho-L-serine + phosphate + H(+) = [HPr protein]-L-serine + diphosphate. Its function is as follows. Catalyzes the ATP- as well as the pyrophosphate-dependent phosphorylation of a specific serine residue in HPr, a phosphocarrier protein of the phosphoenolpyruvate-dependent sugar phosphotransferase system (PTS). HprK/P also catalyzes the pyrophosphate-producing, inorganic phosphate-dependent dephosphorylation (phosphorolysis) of seryl-phosphorylated HPr (P-Ser-HPr). The two antagonistic activities of HprK/P are regulated by several intracellular metabolites, which change their concentration in response to the absence or presence of rapidly metabolisable carbon sources (glucose, fructose, etc.) in the growth medium. Therefore, by controlling the phosphorylation state of HPr, HPrK/P is a sensor enzyme that plays a major role in the regulation of carbon metabolism and sugar transport: it mediates carbon catabolite repression (CCR), and regulates PTS-catalyzed carbohydrate uptake and inducer exclusion. This Listeria welshimeri serovar 6b (strain ATCC 35897 / DSM 20650 / CCUG 15529 / CIP 8149 / NCTC 11857 / SLCC 5334 / V8) protein is HPr kinase/phosphorylase.